Reading from the N-terminus, the 684-residue chain is Multisite-specific tRNA:(cytosine-C(5))-methyltransferase (684 aa).

A compositionally biased stretch (basic residues) spans 1 to 12 (MARRKNFKKGNK). The interval 1 to 24 (MARRKNFKKGNKKTFGARDDSRAQ) is disordered. S-adenosyl-L-methionine contacts are provided by residues 173 to 179 (CAAPGSK), aspartate 202, aspartate 229, and aspartate 257. Residue cysteine 310 is the Nucleophile of the active site. Threonine 426 is subject to Phosphothreonine. A Phosphoserine modification is found at serine 431. Residues 650–684 (KATPSAEEKEKEKETTESPAETTTGTSTEAPSAAN) are disordered. A compositionally biased stretch (basic and acidic residues) spans 655-665 (AEEKEKEKETT). Low complexity predominate over residues 666–684 (ESPAETTTGTSTEAPSAAN). Residue serine 667 is modified to Phosphoserine.

It belongs to the class I-like SAM-binding methyltransferase superfamily. RsmB/NOP family. TRM4 subfamily.

The protein localises to the nucleus. It localises to the nucleolus. The catalysed reaction is cytidine(34) in tRNA precursor + S-adenosyl-L-methionine = 5-methylcytidine(34) in tRNA precursor + S-adenosyl-L-homocysteine + H(+). It carries out the reaction cytidine(40) in tRNA precursor + S-adenosyl-L-methionine = 5-methylcytidine(40) in tRNA precursor + S-adenosyl-L-homocysteine + H(+). The enzyme catalyses cytidine(48) in tRNA + S-adenosyl-L-methionine = 5-methylcytidine(48) in tRNA + S-adenosyl-L-homocysteine + H(+). It catalyses the reaction cytidine(49) in tRNA + S-adenosyl-L-methionine = 5-methylcytidine(49) in tRNA + S-adenosyl-L-homocysteine + H(+). Its function is as follows. Methylates cytosine to m5C at several positions in different tRNAs and pre-tRNAs containing intron. Able to modify tRNAs at all four positions (34, 40, 48 and 49) at which m5C has been found in tRNAs. May be involved in ribosome biogenesis as its disruption leads to increased sensitivity to the antibiotic paromomycin. The polypeptide is Multisite-specific tRNA:(cytosine-C(5))-methyltransferase (NCL1) (Saccharomyces cerevisiae (strain ATCC 204508 / S288c) (Baker's yeast)).